A 283-amino-acid polypeptide reads, in one-letter code: Heavy metal-associated isoprenylated plant protein 3 (283 aa).

The span at 1 to 22 (MGEKKNEGDNKKKGGDNKKKNE) shows a compositional bias: basic and acidic residues. Residues 1–26 (MGEKKNEGDNKKKGGDNKKKNETPSI) form a disordered region. HMA domains follow at residues 25-88 (SITV…KKKV) and 132-195 (VTTA…KRAV). Cys-36 and Cys-39 together coordinate Zn(2+). The span at 82–129 (EKTKKKVDLVSPQPKKEKEKENKNKNDEDKKKSEEKKKPDNNDKKPKE) shows a compositional bias: basic and acidic residues. A disordered region spans residues 82–131 (EKTKKKVDLVSPQPKKEKEKENKNKNDEDKKKSEEKKKPDNNDKKPKETP). Cys-143 and Cys-146 together coordinate Zn(2+). Residues 198–230 (VPPKKEKDKENGNENGEKKKGGGGDGGGKEKTG) are compositionally biased toward basic and acidic residues. The tract at residues 198 to 238 (VPPKKEKDKENGNENGEKKKGGGGDGGGKEKTGNKGGGEGV) is disordered. Cys-280 bears the Cysteine methyl ester mark. Cys-280 is lipidated: S-farnesyl cysteine. Positions 281-283 (VVM) are cleaved as a propeptide — removed in mature form.

This sequence belongs to the HIPP family.

Its subcellular location is the nucleus. The protein resides in the nucleolus. It localises to the cytoplasm. In terms of biological role, heavy-metal-binding protein. Binds high amounts of zinc. May act as an upstream regulator of the salicylate-dependent pathogen response. Involved in abiotic stress responses, and seed and flower development. This is Heavy metal-associated isoprenylated plant protein 3 from Arabidopsis thaliana (Mouse-ear cress).